Consider the following 401-residue polypeptide: MSWQQFKHAWLIKFWAPIPAVIAAGILSTYYFGITGTFWAVTGEFTRWGGQLLQLFGVHAEEWGYFKIIHLEGSPLTRIDGMMILGMFGGCFAAALWANNVKLRMPRSRIRIMQAIIGGIIAGFGARLAMGCNLAAFFTGIPQFSLHAWFFAIATAIGSWFGARFTLLPIFRIPVKMQKVSAASPLTQKPDQARRRFRLGMLVFFGMLGWALLTAMNQPKLGLAMLFGVGFGLLIERAQICFTSAFRDMWITGRTHMAKAIIIGMAVSAIGIFSYVQLGVEPKIMWAGPNAVIGGLLFGFGIVLAGGCETGWMYRAVEGQVHYWWVGLGNVIGSTILAYYWDDFAPALATDWDKINLLKTFGPMGGLLVTYLLLFAALMLIIGWEKRFFRRAAPQTAKEIA.

The Cytoplasmic portion of the chain corresponds to 1 to 13; it reads MSWQQFKHAWLIK. Residues 14–34 traverse the membrane as a helical segment; sequence FWAPIPAVIAAGILSTYYFGI. The Periplasmic segment spans residues 35–78; that stretch reads TGTFWAVTGEFTRWGGQLLQLFGVHAEEWGYFKIIHLEGSPLTR. Residues 79-99 traverse the membrane as a helical segment; sequence IDGMMILGMFGGCFAAALWAN. The Cytoplasmic portion of the chain corresponds to 100–115; sequence NVKLRMPRSRIRIMQA. The helical transmembrane segment at 116–138 threads the bilayer; it reads IIGGIIAGFGARLAMGCNLAAFF. Residues 139-147 are Periplasmic-facing; that stretch reads TGIPQFSLH. A helical transmembrane segment spans residues 148-170; the sequence is AWFFAIATAIGSWFGARFTLLPI. Residues 171-198 are Cytoplasmic-facing; that stretch reads FRIPVKMQKVSAASPLTQKPDQARRRFR. The helical transmembrane segment at 199–219 threads the bilayer; sequence LGMLVFFGMLGWALLTAMNQP. Topologically, residues 220-221 are periplasmic; it reads KL. Residues 222–242 form a helical membrane-spanning segment; the sequence is GLAMLFGVGFGLLIERAQICF. Over 243–259 the chain is Cytoplasmic; that stretch reads TSAFRDMWITGRTHMAK. Residues 260–280 form a helical membrane-spanning segment; that stretch reads AIIIGMAVSAIGIFSYVQLGV. At 281-283 the chain is on the periplasmic side; it reads EPK. A helical membrane pass occupies residues 284-304; that stretch reads IMWAGPNAVIGGLLFGFGIVL. The Cytoplasmic portion of the chain corresponds to 305–320; the sequence is AGGCETGWMYRAVEGQ. Residues 321 to 341 traverse the membrane as a helical segment; it reads VHYWWVGLGNVIGSTILAYYW. At 342-363 the chain is on the periplasmic side; that stretch reads DDFAPALATDWDKINLLKTFGP. The helical transmembrane segment at 364–384 threads the bilayer; that stretch reads MGGLLVTYLLLFAALMLIIGW. Residues 385–401 lie on the Cytoplasmic side of the membrane; sequence EKRFFRRAAPQTAKEIA.

The protein belongs to the TsuA/YedE (TC 9.B.102) family.

The protein resides in the cell inner membrane. This chain is Probable transporter YedE (yedE), found in Escherichia coli (strain K12).